A 92-amino-acid polypeptide reads, in one-letter code: UPF0223 protein SERP0684 (92 aa).

It belongs to the UPF0223 family.

The polypeptide is UPF0223 protein SERP0684 (Staphylococcus epidermidis (strain ATCC 35984 / DSM 28319 / BCRC 17069 / CCUG 31568 / BM 3577 / RP62A)).